The following is a 205-amino-acid chain: Nucleoside triphosphate pyrophosphatase (205 aa).

The active-site Proton acceptor is Asp-76.

This sequence belongs to the Maf family. The cofactor is a divalent metal cation.

It localises to the cytoplasm. It carries out the reaction a ribonucleoside 5'-triphosphate + H2O = a ribonucleoside 5'-phosphate + diphosphate + H(+). The enzyme catalyses a 2'-deoxyribonucleoside 5'-triphosphate + H2O = a 2'-deoxyribonucleoside 5'-phosphate + diphosphate + H(+). In terms of biological role, nucleoside triphosphate pyrophosphatase. May have a dual role in cell division arrest and in preventing the incorporation of modified nucleotides into cellular nucleic acids. This chain is Nucleoside triphosphate pyrophosphatase, found in Orientia tsutsugamushi (strain Boryong) (Rickettsia tsutsugamushi).